A 99-amino-acid chain; its full sequence is A-type ATP synthase subunit F (99 aa).

Belongs to the V-ATPase F subunit family. In terms of assembly, has multiple subunits with at least A(3), B(3), C, D, E, F, H, I and proteolipid K(x).

Its subcellular location is the cell membrane. In terms of biological role, component of the A-type ATP synthase that produces ATP from ADP in the presence of a proton gradient across the membrane. This is A-type ATP synthase subunit F from Methanococcus vannielii (strain ATCC 35089 / DSM 1224 / JCM 13029 / OCM 148 / SB).